The following is a 287-amino-acid chain: Pentatricopeptide repeat-containing protein At4g18975, chloroplastic (287 aa).

A chloroplast-targeting transit peptide spans 1-34 (MALCNLNPTQGIFPLQGLSKSQEFICFSLLQSPR). PPR repeat units lie at residues 165 to 199 (TMGT…HTRS) and 201 to 235 (PRRL…KVSP).

The protein belongs to the PPR family. P subfamily.

Its subcellular location is the plastid. It localises to the chloroplast. The polypeptide is Pentatricopeptide repeat-containing protein At4g18975, chloroplastic (Arabidopsis thaliana (Mouse-ear cress)).